Consider the following 842-residue polypeptide: Serine/threonine-protein kinase CLA4 (842 aa).

The disordered stretch occupies residues 12–34; it reads DNDFQNIGPAPRPPSSNSQGRTC. 2 positions are modified to phosphoserine: S29 and S46. The PH domain occupies 61 to 179; it reads SKKKSGWVSY…WLDAIFAKCP (119 aa). A CRIB domain is found at 184 to 197; it reads VSSPTNFTHKVHVG. Residues 247–274 are compositionally biased toward polar residues; the sequence is GNPTNTLDKPQSGETSSSQKSLPNSYND. A disordered region spans residues 247–524; that stretch reads GNPTNTLDKP…KPKKPARPTM (278 aa). Positions 279–296 are enriched in low complexity; it reads NNSVNSKSSSGVSSSMVS. Residues 297-307 show a composition bias toward polar residues; the sequence is QRKTSQPPNTK. Residues 308 to 319 show a composition bias toward low complexity; the sequence is SPVSLGSGSLPP. Polar residues predominate over residues 323-343; that stretch reads KLPTSQSNIPRHLQNVPNQQY. S351 and S367 each carry phosphoserine. The segment covering 372–387 has biased composition (low complexity); that stretch reads QQQQQQQQQQKQQHQQ. Residues 396-408 show a composition bias toward pro residues; it reads SPSPSPSPSPLNP. The segment covering 418-435 has biased composition (low complexity); sequence PYSKQPQSPLSSQSTQNQ. The residue at position 425 (S425) is a Phosphoserine. 2 stretches are compositionally biased toward polar residues: residues 470 to 481 and 488 to 497; these read PSNQNATSNTHV and NDQSTPQTMR. In terms of domain architecture, Protein kinase spans 546 to 825; the sequence is FKVIEKAGQG…TEELLHHGFF (280 aa). ATP-binding positions include 552–560 and K594; that span reads AGQGASGSV. Catalysis depends on D693, which acts as the Proton acceptor.

The protein belongs to the protein kinase superfamily. STE Ser/Thr protein kinase family. STE20 subfamily. Interacts with CDC42.

The catalysed reaction is L-seryl-[protein] + ATP = O-phospho-L-seryl-[protein] + ADP + H(+). The enzyme catalyses L-threonyl-[protein] + ATP = O-phospho-L-threonyl-[protein] + ADP + H(+). Functionally, involved in budding and cytokinesis. This Saccharomyces cerevisiae (strain ATCC 204508 / S288c) (Baker's yeast) protein is Serine/threonine-protein kinase CLA4 (CLA4).